We begin with the raw amino-acid sequence, 371 residues long: N-acetyllactosaminide alpha-2,3-sialyltransferase (371 aa).

G255 lines the CMP-N-acetyl-beta-neuraminate pocket. D258 functions as the Proton acceptor in the catalytic mechanism. CMP-N-acetyl-beta-neuraminate contacts are provided by residues 278–282, 299–300, and 322–323; these read APHPR, IE, and SG. The active-site Proton donor is H280.

The protein belongs to the glycosyltransferase 52 family. Homodimer.

The protein resides in the cell outer membrane. The enzyme catalyses a beta-D-galactosyl-(1-&gt;4)-N-acetyl-beta-D-glucosaminyl derivative + CMP-N-acetyl-beta-neuraminate = an N-acetyl-alpha-neuraminyl-(2-&gt;3)-beta-D-galactosyl-(1-&gt;4)-N-acetyl-beta-D-glucosaminyl derivative + CMP + H(+). It functions in the pathway bacterial outer membrane biogenesis; lipooligosaccharide biosynthesis. In terms of biological role, catalyzes the transfer of sialic acid from the substrate CMP-N-acetylneuraminate to the terminal galactose residue of the lacto-N-neotetraose branch of surface lipooligosaccharide (LOS), forming an alpha-2,3-sialyl linkage. Thus, functions in the sialylation of LOS, which plays a role in the evasion of the host immune response by protecting N.meningitidis from complement-mediated serum killing and from phagocytic killing by neutrophils. This chain is N-acetyllactosaminide alpha-2,3-sialyltransferase, found in Neisseria meningitidis serogroup A / serotype 4A (strain DSM 15465 / Z2491).